We begin with the raw amino-acid sequence, 376 residues long: Chaperone protein DnaJ (376 aa).

Residues 5–70 (DFYEVLGVGR…DKKAAYDQFG (66 aa)) enclose the J domain. The CR-type zinc-finger motif lies at 132–210 (GLSKELRIPT…CHGEGRVEKS (79 aa)). Residues Cys145, Cys148, Cys162, Cys165, Cys184, Cys187, Cys198, and Cys201 each coordinate Zn(2+). CXXCXGXG motif repeat units lie at residues 145 to 152 (CEPCDGSG), 162 to 169 (CGTCHGQG), 184 to 191 (CPTCHGRG), and 198 to 205 (CNKCHGEG).

This sequence belongs to the DnaJ family. In terms of assembly, homodimer. It depends on Zn(2+) as a cofactor.

Its subcellular location is the cytoplasm. Participates actively in the response to hyperosmotic and heat shock by preventing the aggregation of stress-denatured proteins and by disaggregating proteins, also in an autonomous, DnaK-independent fashion. Unfolded proteins bind initially to DnaJ; upon interaction with the DnaJ-bound protein, DnaK hydrolyzes its bound ATP, resulting in the formation of a stable complex. GrpE releases ADP from DnaK; ATP binding to DnaK triggers the release of the substrate protein, thus completing the reaction cycle. Several rounds of ATP-dependent interactions between DnaJ, DnaK and GrpE are required for fully efficient folding. Also involved, together with DnaK and GrpE, in the DNA replication of plasmids through activation of initiation proteins. In Shewanella piezotolerans (strain WP3 / JCM 13877), this protein is Chaperone protein DnaJ.